Here is a 359-residue protein sequence, read N- to C-terminus: Type II restriction enzyme HgiDI (359 aa).

It catalyses the reaction Endonucleolytic cleavage of DNA to give specific double-stranded fragments with terminal 5'-phosphates.. Its function is as follows. A P subtype restriction enzyme that recognizes the double-stranded sequence 5'-GRCGYC-3' and cleaves after R-2. This is Type II restriction enzyme HgiDI from Herpetosiphon aurantiacus (Herpetosiphon giganteus).